The following is a 933-amino-acid chain: Progesterone receptor (933 aa).

Positions 1–164 (MTELKAKGPR…PATQGVLSPL (164 aa)) are AF3; mediates transcriptional activation. Residues 1-256 (MTELKAKGPR…AAAGGGAAAV (256 aa)) form a disordered region. The modulating, Pro-Rich stretch occupies residues 1–566 (MTELKAKGPR…YSFESLPQKI (566 aa)). Position 20 is a phosphoserine (serine 20). The LXXL motif 1 motif lies at 55–59 (LDGLL). Serine 81 is modified (phosphoserine). Positions 115–119 (LETLL) match the LXXL motif 2 motif. Phosphoserine occurs at positions 130 and 162. The interval 165-305 (MSRSGGKAGD…LATTVMDFIH (141 aa)) is mediates transcriptional transrepression. The short motif at 183-187 (KVLPR) is the Nuclear localization signal element. Phosphoserine occurs at positions 190 and 213. A compositionally biased stretch (acidic residues) spans 220-231 (EVEEEDGSESEE). The span at 232–246 (SAGPLLKGKPRALGG) shows a compositional bias: low complexity. Position 294 is a phosphoserine; by MAPK1 (serine 294). The segment at 331-378 (GGAGAASAFAPPRSSPSASSTPVAVGDFPDCAYPPDAEPKDDAYPLYS) is disordered. Over residues 335 to 350 (AASAFAPPRSSPSASS) the composition is skewed to low complexity. Serine 345 carries the phosphoserine; by MAPK modification. Lysine 388 is covalently cross-linked (Glycyl lysine isopeptide (Lys-Gly) (interchain with G-Cter in SUMO); alternate). Lysine 388 participates in a covalent cross-link: Glycyl lysine isopeptide (Lys-Gly) (interchain with G-Cter in ubiquitin); alternate. Residue serine 400 is modified to Phosphoserine; by CDK2. Positions 415–452 (PDFPLGPPPPLPPRAPPSRPGEAAVTAAPASASVSSAS) are disordered. Pro residues predominate over residues 418–433 (PLGPPPPLPPRAPPSR). The span at 434–452 (PGEAAVTAAPASASVSSAS) shows a compositional bias: low complexity. Residues 456–546 (STLECILYKA…VYPPYLNYLR (91 aa)) form an AF1; mediates transcriptional activation region. A Glycyl lysine isopeptide (Lys-Gly) (interchain with G-Cter in SUMO) cross-link involves residue lysine 531. 2 NR C4-type zinc fingers span residues 567 to 587 (CLIC…CGSC) and 603 to 627 (CAGR…LRKC). Positions 567-639 (CLICGDEASG…AGMVLGGRKF (73 aa)) form a DNA-binding region, nuclear receptor. Serine 676 is subject to Phosphoserine. One can recognise an NR LBD domain in the interval 679–913 (QDIQLIPPLI…EFPEMMSEVI (235 aa)). The tract at residues 687 to 933 (LINLLMSIEP…MVKPLLFHKK (247 aa)) is AF2; mediates transcriptional activation. Arginine 766 is a progesterone binding site.

The protein belongs to the nuclear hormone receptor family. As to quaternary structure, interacts with SMARD1 and UNC45A. Interacts with CUEDC2; the interaction promotes ubiquitination, decreases sumoylation, and represses transcriptional activity. Interacts with PIAS3; the interaction promotes sumoylation of PR in a hormone-dependent manner, inhibits DNA-binding, and alters nuclear export. Interacts with SP1; the interaction requires ligand-induced phosphorylation on Ser-345 by ERK1/2-MAPK. Interacts with PRMT2. Interacts with NCOA2 and NCOA1. Interacts with KLF9. Interacts with GTF2B. Post-translationally, phosphorylated on multiple serine sites. Several of these sites are hormone-dependent. Phosphorylation on Ser-294 is highly hormone-dependent and modulates ubiquitination and sumoylation on Lys-388. Phosphorylation on Ser-102 and Ser-345 also requires induction by hormone. Basal phosphorylation on Ser-81, Ser-162, Ser-190 and Ser-400 is increased in response to progesterone and can be phosphorylated in vitro by the CDK2-A1 complex. Increased levels of phosphorylation on Ser-400 also in the presence of EGF, heregulin, IGF, PMA and FBS. Phosphorylation at this site by CDK2 is ligand-independent, and increases nuclear translocation and transcriptional activity. Phosphorylation at Ser-162 and Ser-294, but not at Ser-190, is impaired during the G(2)/M phase of the cell cycle. Phosphorylation on Ser-345 by ERK1/2 MAPK is required for interaction with SP1. Sumoylation is hormone-dependent and represses transcriptional activity. Sumoylation on all three sites is enhanced by PIAS3. Desumoylated by SENP1. Sumoylation on Lys-388, the main site of sumoylation, is repressed by ubiquitination on the same site, and modulated by phosphorylation at Ser-294. In terms of processing, ubiquitination is hormone-dependent and represses sumoylation on the same site. Promoted by MAPK-mediated phosphorylation on Ser-294. Ubiquitinated by UBR5, leading to its degradation: UBR5 specifically recognizes and binds ligand-bound PGR when it is not associated with coactivators (NCOAs). In presence of NCOAs, the UBR5-degron is not accessible, preventing its ubiquitination and degradation. Post-translationally, palmitoylated by ZDHHC7 and ZDHHC21. Palmitoylation is required for plasma membrane targeting and for rapid intracellular signaling via ERK and AKT kinases and cAMP generation.

It is found in the nucleus. Its subcellular location is the cytoplasm. The steroid hormones and their receptors are involved in the regulation of eukaryotic gene expression and affect cellular proliferation and differentiation in target tissues. Transcriptional activator of several progesteron-dependent promoters in a variety of cell types. Involved in activation of SRC-dependent MAPK signaling on hormone stimulation. In Gorilla gorilla gorilla (Western lowland gorilla), this protein is Progesterone receptor (PGR).